Consider the following 132-residue polypeptide: Small ribosomal subunit protein uS11 (132 aa).

It belongs to the universal ribosomal protein uS11 family. In terms of assembly, part of the 30S ribosomal subunit. Interacts with proteins S7 and S18. Binds to IF-3.

Located on the platform of the 30S subunit, it bridges several disparate RNA helices of the 16S rRNA. Forms part of the Shine-Dalgarno cleft in the 70S ribosome. The protein is Small ribosomal subunit protein uS11 of Alcanivorax borkumensis (strain ATCC 700651 / DSM 11573 / NCIMB 13689 / SK2).